The following is a 469-amino-acid chain: UDP-N-acetylmuramoylalanine--D-glutamate ligase (469 aa).

Residue Gly121 to Thr127 coordinates ATP.

It belongs to the MurCDEF family.

Its subcellular location is the cytoplasm. The catalysed reaction is UDP-N-acetyl-alpha-D-muramoyl-L-alanine + D-glutamate + ATP = UDP-N-acetyl-alpha-D-muramoyl-L-alanyl-D-glutamate + ADP + phosphate + H(+). Its pathway is cell wall biogenesis; peptidoglycan biosynthesis. Its function is as follows. Cell wall formation. Catalyzes the addition of glutamate to the nucleotide precursor UDP-N-acetylmuramoyl-L-alanine (UMA). This is UDP-N-acetylmuramoylalanine--D-glutamate ligase from Rhodopseudomonas palustris (strain ATCC BAA-98 / CGA009).